The chain runs to 367 residues: Alanine racemase (367 aa).

Lys-40 (proton acceptor; specific for D-alanine) is an active-site residue. Lys-40 carries the post-translational modification N6-(pyridoxal phosphate)lysine. Arg-136 contributes to the substrate binding site. Tyr-263 (proton acceptor; specific for L-alanine) is an active-site residue. Position 310 (Met-310) interacts with substrate.

Belongs to the alanine racemase family. It depends on pyridoxal 5'-phosphate as a cofactor.

It catalyses the reaction L-alanine = D-alanine. It functions in the pathway amino-acid biosynthesis; D-alanine biosynthesis; D-alanine from L-alanine: step 1/1. Functionally, catalyzes the interconversion of L-alanine and D-alanine. May also act on other amino acids. This chain is Alanine racemase (alr), found in Lactococcus lactis subsp. lactis (strain IL1403) (Streptococcus lactis).